A 23-amino-acid chain; its full sequence is Phospholipase A2 crotoxin basic chain 3 (23 aa).

It depends on Ca(2+) as a cofactor. Post-translationally, contains 7 disulfide bonds. In terms of tissue distribution, expressed by the venom gland.

It is found in the secreted. It catalyses the reaction a 1,2-diacyl-sn-glycero-3-phosphocholine + H2O = a 1-acyl-sn-glycero-3-phosphocholine + a fatty acid + H(+). Functionally, snake venom phospholipase A2 (PLA2) that shows presynaptic neurotoxicity. PLA2 catalyzes the calcium-dependent hydrolysis of the 2-acyl groups in 3-sn-phosphoglycerides. The polypeptide is Phospholipase A2 crotoxin basic chain 3 (Crotalus durissus terrificus (South American rattlesnake)).